Consider the following 341-residue polypeptide: HTH-type transcriptional repressor PurR (341 aa).

An HTH lacI-type domain is found at 2–56 (ATIKDVAKHAGVSTTTVSHVINKTRFVAEDTKAAVWAAIKALNYSPSAVARSLKV). The segment at residues 4 to 23 (IKDVAKHAGVSTTTVSHVIN) is a DNA-binding region (H-T-H motif). The DNA-binding element occupies 48–56 (SAVARSLKV). The hypoxanthine site is built by Tyr73, Arg190, Thr192, Phe221, and Asp275.

In terms of assembly, homodimer.

It participates in purine metabolism; purine nucleotide biosynthesis [regulation]. Its function is as follows. Is the main repressor of the genes involved in the de novo synthesis of purine nucleotides, regulating purB, purC, purEK, purF, purHD, purL, purMN and guaBA expression. PurR is allosterically activated to bind its cognate DNA by binding the purine corepressors, hypoxanthine or guanine, thereby effecting transcription repression. The sequence is that of HTH-type transcriptional repressor PurR from Photorhabdus laumondii subsp. laumondii (strain DSM 15139 / CIP 105565 / TT01) (Photorhabdus luminescens subsp. laumondii).